Consider the following 474-residue polypeptide: Polyamine oxidase 7 (474 aa).

Positions 1–27 are cleaved as a signal peptide; that stretch reads MTKPTTMAIFLSIVLLSMAQLPSLVAG. The FAD site is built by Glu61 and Arg69. Residues Asn103 and Asn150 are each glycosylated (N-linked (GlcNAc...) asparagine). Residue Val261 participates in FAD binding. Asn278 is a glycosylation site (N-linked (GlcNAc...) asparagine). Residue Glu454 coordinates FAD.

It belongs to the flavin monoamine oxidase family. Requires FAD as cofactor.

The protein localises to the secreted. Its subcellular location is the extracellular space. It localises to the apoplast. It carries out the reaction spermine + O2 + H2O = 3-aminopropanal + spermidine + H2O2. It catalyses the reaction N(1)-acetylspermine + O2 + H2O = 3-acetamidopropanal + spermidine + H2O2. The catalysed reaction is norspermine + O2 + H2O = norspermidine + 3-aminopropanal + H2O2. The enzyme catalyses spermidine + O2 + H2O = 3-aminopropanal + putrescine + H2O2. It carries out the reaction N(1)-acetylspermidine + O2 + H2O = 3-acetamidopropanal + putrescine + H2O2. It catalyses the reaction thermospermine + O2 + H2O = 3-aminopropanal + spermidine + H2O2. The protein operates within amine and polyamine degradation; spermidine degradation. It participates in amine and polyamine degradation; spermine degradation. In terms of biological role, flavoenzyme involved in polyamine back-conversion. Catalyzes the oxidation of the secondary amino group of polyamines, such as spermine, spermidine and their acetyl derivatives. Substrate preference is spermine &gt; spermidine &gt; N(1)-acetylspermine &gt; N(1)-acetylspermidine &gt; norspermine &gt; thermospermine. No activity detected when putrescine is used as substrate. May play a role in producing hydrogen peroxide for secondary wall thickening through lignin formation during anther development. This Oryza sativa subsp. japonica (Rice) protein is Polyamine oxidase 7.